The following is a 325-amino-acid chain: GMP reductase (325 aa).

Cys174 (thioimidate intermediate) is an active-site residue. 203-226 (IIADGGLRTHGDIAKSIRFGATMV) lines the NADP(+) pocket.

Belongs to the IMPDH/GMPR family. GuaC type 2 subfamily.

The catalysed reaction is IMP + NH4(+) + NADP(+) = GMP + NADPH + 2 H(+). Its function is as follows. Catalyzes the irreversible NADPH-dependent deamination of GMP to IMP. It functions in the conversion of nucleobase, nucleoside and nucleotide derivatives of G to A nucleotides, and in maintaining the intracellular balance of A and G nucleotides. The protein is GMP reductase of Staphylococcus epidermidis (strain ATCC 35984 / DSM 28319 / BCRC 17069 / CCUG 31568 / BM 3577 / RP62A).